The sequence spans 222 residues: Phosphoribosylformylglycinamidine synthase subunit PurQ (222 aa).

In terms of domain architecture, Glutamine amidotransferase type-1 spans 3–222 (SAVVLLPGLN…LFEGALGIAA (220 aa)). Cysteine 86 acts as the Nucleophile in catalysis. Residues histidine 196 and glutamate 198 contribute to the active site.

In terms of assembly, part of the FGAM synthase complex composed of 1 PurL, 1 PurQ and 2 PurS subunits.

The protein resides in the cytoplasm. It catalyses the reaction N(2)-formyl-N(1)-(5-phospho-beta-D-ribosyl)glycinamide + L-glutamine + ATP + H2O = 2-formamido-N(1)-(5-O-phospho-beta-D-ribosyl)acetamidine + L-glutamate + ADP + phosphate + H(+). It carries out the reaction L-glutamine + H2O = L-glutamate + NH4(+). Its pathway is purine metabolism; IMP biosynthesis via de novo pathway; 5-amino-1-(5-phospho-D-ribosyl)imidazole from N(2)-formyl-N(1)-(5-phospho-D-ribosyl)glycinamide: step 1/2. Part of the phosphoribosylformylglycinamidine synthase complex involved in the purines biosynthetic pathway. Catalyzes the ATP-dependent conversion of formylglycinamide ribonucleotide (FGAR) and glutamine to yield formylglycinamidine ribonucleotide (FGAM) and glutamate. The FGAM synthase complex is composed of three subunits. PurQ produces an ammonia molecule by converting glutamine to glutamate. PurL transfers the ammonia molecule to FGAR to form FGAM in an ATP-dependent manner. PurS interacts with PurQ and PurL and is thought to assist in the transfer of the ammonia molecule from PurQ to PurL. The sequence is that of Phosphoribosylformylglycinamidine synthase subunit PurQ from Mesorhizobium japonicum (strain LMG 29417 / CECT 9101 / MAFF 303099) (Mesorhizobium loti (strain MAFF 303099)).